The sequence spans 509 residues: Cytochrome P450 4A10 (509 aa).

The next 2 helical transmembrane spans lie at 15-35 and 121-141; these read LSGFLQVASVLGLLLLLVKAV and LLAPWIGYGLLLLNGQPWFQH. Glu-320 is a binding site for heme. Ser-439 is subject to Phosphoserine. Cys-456 is a heme binding site.

It belongs to the cytochrome P450 family. The cofactor is heme. As to expression, highly expressed in the kidneys of both genders.

The protein resides in the endoplasmic reticulum membrane. The protein localises to the microsome membrane. It carries out the reaction an omega-methyl-long-chain fatty acid + reduced [NADPH--hemoprotein reductase] + O2 = an omega-hydroxy-long-chain fatty acid + oxidized [NADPH--hemoprotein reductase] + H2O + H(+). It catalyses the reaction dodecanoate + reduced [NADPH--hemoprotein reductase] + O2 = 12-hydroxydodecanoate + oxidized [NADPH--hemoprotein reductase] + H2O + H(+). The enzyme catalyses dodecanoate + reduced [NADPH--hemoprotein reductase] + O2 = 11-hydroxydodecanoate + oxidized [NADPH--hemoprotein reductase] + H2O + H(+). The catalysed reaction is tetradecanoate + reduced [NADPH--hemoprotein reductase] + O2 = 14-hydroxytetradecanoate + oxidized [NADPH--hemoprotein reductase] + H2O + H(+). It carries out the reaction hexadecanoate + reduced [NADPH--hemoprotein reductase] + O2 = 16-hydroxyhexadecanoate + oxidized [NADPH--hemoprotein reductase] + H2O + H(+). It catalyses the reaction (9Z)-octadecenoate + reduced [NADPH--hemoprotein reductase] + O2 = 18-hydroxy-(9Z)-octadecenoate + oxidized [NADPH--hemoprotein reductase] + H2O + H(+). The enzyme catalyses (9Z,12Z)-octadecadienoate + reduced [NADPH--hemoprotein reductase] + O2 = 18-hydroxy-(9Z,12Z)-octadecadienoate + oxidized [NADPH--hemoprotein reductase] + H2O + H(+). The catalysed reaction is (9Z,12Z)-octadecadienoate + reduced [NADPH--hemoprotein reductase] + O2 = 17-hydroxy-(9Z,12Z)-octadecadienoate + oxidized [NADPH--hemoprotein reductase] + H2O + H(+). It carries out the reaction (5Z,8Z,11Z,14Z)-eicosatetraenoate + reduced [NADPH--hemoprotein reductase] + O2 = 20-hydroxy-(5Z,8Z,11Z,14Z)-eicosatetraenoate + oxidized [NADPH--hemoprotein reductase] + H2O + H(+). It catalyses the reaction 8,9-epoxy-(5Z,11Z,14Z)-eicosatrienoate + reduced [NADPH--hemoprotein reductase] + O2 = 20-hydroxy-8,9-epoxy-(5Z,11Z,14Z)-eicosatrienoate + oxidized [NADPH--hemoprotein reductase] + H2O + H(+). Its function is as follows. A cytochrome P450 monooxygenase involved in the metabolism of fatty acids. Catalyzes predominantly the oxidation of the terminal carbon (omega-oxidation) of long-chain fatty acids. Acts as a major omega-hydroxylase for dodecanoic (lauric) acid in liver. In kidney, may play an important role in omega-hydroxylation of (5Z,8Z,11Z,14Z)-eicosatetraenoic acid (arachidonate) to 20-hydroxyeicosatetraenoic acid (20-HETE), a signaling molecule acting both as vasoconstrictive and natriuretic with overall effect on arterial blood pressure. Also participates in the formation of anti-inflammatory hydroxyepoxyeicosatrienoic acids (HEETs) in kidney by converting 8,9-epoxyeicosatrienoic acid (EET) to 20,8,9-HEET, an activator of PPARA. Displays substantially lower fatty acid omega-1 hydroxylase activity. Mechanistically, uses molecular oxygen inserting one oxygen atom into a substrate, and reducing the second into a water molecule, with two electrons provided by NADPH via cytochrome P450 reductase (CPR; NADPH-ferrihemoprotein reductase). The chain is Cytochrome P450 4A10 from Mus musculus (Mouse).